The following is a 144-amino-acid chain: MLNIEQIKEIIPHRYPFLLVDQVLEVEEGKRAVGIKNVSANEEFFNGHFPEYAVMPGVLIVEALAQVGAIAILKKEENRGRLAFFGGIDHCRFKKQVRPGDQLRLEVELTRVRGPIGKGKAVATVDGEIVCEAEITFALGEKKE.

His-48 is a catalytic residue.

Belongs to the thioester dehydratase family. FabZ subfamily.

It localises to the cytoplasm. The enzyme catalyses a (3R)-hydroxyacyl-[ACP] = a (2E)-enoyl-[ACP] + H2O. Functionally, involved in unsaturated fatty acids biosynthesis. Catalyzes the dehydration of short chain beta-hydroxyacyl-ACPs and long chain saturated and unsaturated beta-hydroxyacyl-ACPs. This chain is 3-hydroxyacyl-[acyl-carrier-protein] dehydratase FabZ, found in Bacillus cytotoxicus (strain DSM 22905 / CIP 110041 / 391-98 / NVH 391-98).